The sequence spans 337 residues: Large ribosomal subunit protein uL3 (337 aa).

This sequence belongs to the universal ribosomal protein uL3 family. In terms of assembly, part of the 50S ribosomal subunit. Forms a cluster with proteins L14 and L24e.

Functionally, one of the primary rRNA binding proteins, it binds directly near the 3'-end of the 23S rRNA, where it nucleates assembly of the 50S subunit. The polypeptide is Large ribosomal subunit protein uL3 (Methanospirillum hungatei JF-1 (strain ATCC 27890 / DSM 864 / NBRC 100397 / JF-1)).